We begin with the raw amino-acid sequence, 750 residues long: Nibrin (750 aa).

Positions 24-83 (YIVGRKNCAILIENDQSISRNHAVLRVNFPVTSLSQTDEIPTLTIKDNSKYGTFINEEKM) constitute an FHA domain. BRCT domains are found at residues 105–181 (KFRV…SEFL) and 224–315 (GKTF…LAVI). The mediates interaction with SP100 stretch occupies residues 111–328 (EPLVVCSSCL…TESYCNPQGQ (218 aa)). An interaction with MTOR, MAPKAP1 and RICTOR region spans residues 221–403 (IFKGKTFVFL…SRKLLQGTCN (183 aa)). T337 is subject to Phosphothreonine. At S343 the chain carries Phosphoserine; by ATM. Phosphoserine is present on residues S347 and S433. Disordered stretches follow at residues 429–479 (NYQL…SSCK) and 494–550 (QPAG…RKRK). K436 is covalently cross-linked (Glycyl lysine isopeptide (Lys-Gly) (interchain with G-Cter in ubiquitin)). Polar residues predominate over residues 446–457 (WSSQQQLNSIKN). The short motif at 461–467 (PCSRKRE) is the Nuclear localization signal element. A compositionally biased stretch (basic and acidic residues) spans 502–514 (KSKDHESQSETLD). Residues S508 and S517 each carry the phosphoserine modification. K528 participates in a covalent cross-link: Glycyl lysine isopeptide (Lys-Gly) (interchain with G-Cter in SUMO2). Over residues 540-550 (STEDLRARKRK) the composition is skewed to basic and acidic residues. Residues K569 and K580 each participate in a glycyl lysine isopeptide (Lys-Gly) (interchain with G-Cter in SUMO2) cross-link. Positions 581-599 (QEADVSIRKKPRMDAERNQ) are enriched in basic and acidic residues. The segment at 581–622 (QEADVSIRKKPRMDAERNQHLNGGPVPESNSALQEDETGKKD) is disordered. Glycyl lysine isopeptide (Lys-Gly) (interchain with G-Cter in ubiquitin) cross-links involve residues K683, K687, and K732. A FxF/Y motif motif is present at residues 737-746 (ADDLFRYNPN).

This sequence belongs to the Nibrin family. As to quaternary structure, component of the MRN complex composed of two heterodimers RAD50 and MRE11 associated with a single NBN. The MRN complexes dimerize on DNA to form joined MRN-MRN oligomers required for DNA double-strand break repair. The MRN complexes dimerize on DNA to form joined MRN-MRN oligomers required for DNA double-strand break repair. As part of the MRN complex, interacts with MCM9; the interaction recruits the complex to DNA repair sites. Component of the BASC complex, at least composed of BRCA1, MSH2, MSH6, MLH1, ATM, BLM, RAD50, MRE11 and NBN. Interacts with histone H2AX; this requires phosphorylation of H2AX on 'Ser-139' and promotes NBN recruitment to DNA damage sites. Interacts with (phosphorylated) MDC1; promoting NBN recruitment to DNA damage sites. Interacts with (phosphorylated) RAD17; promoting NBN recruitment to DNA damage sites. Interacts (via FxF/Y motif) with ATM. Interacts with HJURP. Interacts with INTS3. Interacts with KPNA2. Interacts with TERF2; interaction is disrupted upon NBN phosphorylation by CDK2. Interacts with (phosphorylated) RBBP8/CtIP; the interaction links the role of the MRN complex in DNA double-strand break sensing to resection. Interacts with SP100; recruits NBN to PML bodies. Interacts with ATF2. Interacts with MTOR, MAPKAP1 isoform 2 and RICTOR; indicative for an association with the mTORC2 complex. Interacts with MRNIP. Interacts with UFL1; promoting UFL1 recruitment to double-strand breaks following DNA damage. Interacts with CYREN (via XLF motif). In terms of processing, phosphorylated by ATM in response of ionizing radiation, and such phosphorylation is responsible intra-S phase checkpoint control and telomere maintenance. Phosphorylated at Ser-433 by CDK2 in S/G2 phases abolishes interaction with TERF2, enabling DCLRE1B/Apollo recruitment to telomeres. Phosphorylation at Ser-433 in response to dysfunctional telomeres promotes non-homologous end joining repair at telomeres, while dephosphorylation by PPP1CA promotes microhomology-mediated end-joining (MMEJ) repair. Post-translationally, ubiquitinated at Lys-436 via 'Lys-6'-linked ubiquitin chains by RNF8, promoting NBN recruitment to DNA double-strand breaks (DSBs). Ubiquitinated at Lys-687 via 'Lys-63'-linked ubiquitin chains by PELI1: ubiquitination takes place following PELI1 phosphorylation and promotes ATM activation and DNA repair. Ubiquitinated at Lys-732 via 'Lys-63'-linked ubiquitin chains by the SCF(SKP2) complex: ubiquitination takes place following SKP2 phosphorylation and promotes ATM activation and DNA repair. Present at approximately equal levels in the heart at fetal day 17, at relatively constant levels at postnatal days 10, 17 and 21 and at slightly lower levels in the adult heart. Barely detectable in the brain. Not detected in kidney, very low levels in liver and skeletal muscle and moderate levels in heart, lung and brain (at protein level).

The protein resides in the nucleus. The protein localises to the chromosome. Its subcellular location is the PML body. It localises to the telomere. Functionally, component of the MRN complex, which plays a central role in double-strand break (DSB) repair, DNA recombination, maintenance of telomere integrity and meiosis. The MRN complex is involved in the repair of DNA double-strand breaks (DSBs) via homologous recombination (HR), an error-free mechanism which primarily occurs during S and G2 phases. The complex (1) mediates the end resection of damaged DNA, which generates proper single-stranded DNA, a key initial steps in HR, and is (2) required for the recruitment of other repair factors and efficient activation of ATM and ATR upon DNA damage. The MRN complex possesses single-strand endonuclease activity and double-strand-specific 3'-5' exonuclease activity, which are provided by MRE11, to initiate end resection, which is required for single-strand invasion and recombination. Within the MRN complex, NBN acts as a protein-protein adapter, which specifically recognizes and binds phosphorylated proteins, promoting their recruitment to DNA damage sites. Recruits MRE11 and RAD50 components of the MRN complex to DSBs in response to DNA damage. Promotes the recruitment of PI3/PI4-kinase family members ATM, ATR, and probably DNA-PKcs to the DNA damage sites, activating their functions. Mediates the recruitment of phosphorylated RBBP8/CtIP to DSBs, leading to cooperation between the MRN complex and RBBP8/CtIP to initiate end resection. RBBP8/CtIP specifically promotes the endonuclease activity of the MRN complex to clear DNA ends containing protein adducts. The MRN complex is also required for the processing of R-loops. NBN also functions in telomere length maintenance via its interaction with TERF2: interaction with TERF2 during G1 phase preventing recruitment of DCLRE1B/Apollo to telomeres. NBN also promotes DNA repair choice at dysfunctional telomeres: NBN phosphorylation by CK2 promotes non-homologous end joining repair at telomeres, while unphosphorylated NBN promotes microhomology-mediated end-joining (MMEJ) repair. Enhances AKT1 phosphorylation possibly by association with the mTORC2 complex. This chain is Nibrin (Nbn), found in Rattus norvegicus (Rat).